The following is a 193-amino-acid chain: MNFLAHLHLAHLAESSLSGNLLADFVRGNPEESFPPDVVAGIHMHRRIDVLTDNLPEVREAREWFRNETRRVAPITLDVMWDHFLSRHWSQLSPDFPLQEFTCYAREQVMTILPDSPPRFINLNNYLWSEQWLVRYRDMDFIQSVLNGMASRRPRLDALRDSWYDLDAHYDALETRFWQFYPRMMEQASRKAL.

Belongs to the AcpH family.

It catalyses the reaction holo-[ACP] + H2O = apo-[ACP] + (R)-4'-phosphopantetheine + H(+). Its function is as follows. Converts holo-ACP to apo-ACP by hydrolytic cleavage of the phosphopantetheine prosthetic group from ACP. The chain is Acyl carrier protein phosphodiesterase from Escherichia coli O127:H6 (strain E2348/69 / EPEC).